Reading from the N-terminus, the 34-residue chain is Photosystem II reaction center protein M (34 aa).

A helical membrane pass occupies residues 5–25; it reads ILAFIATALFILIPTAFLLII.

Belongs to the PsbM family. In terms of assembly, PSII is composed of 1 copy each of membrane proteins PsbA, PsbB, PsbC, PsbD, PsbE, PsbF, PsbH, PsbI, PsbJ, PsbK, PsbL, PsbM, PsbT, PsbX, PsbY, PsbZ, Psb30/Ycf12, at least 3 peripheral proteins of the oxygen-evolving complex and a large number of cofactors. It forms dimeric complexes.

It localises to the plastid. The protein resides in the chloroplast thylakoid membrane. In terms of biological role, one of the components of the core complex of photosystem II (PSII). PSII is a light-driven water:plastoquinone oxidoreductase that uses light energy to abstract electrons from H(2)O, generating O(2) and a proton gradient subsequently used for ATP formation. It consists of a core antenna complex that captures photons, and an electron transfer chain that converts photonic excitation into a charge separation. This subunit is found at the monomer-monomer interface. This chain is Photosystem II reaction center protein M, found in Agrostis stolonifera (Creeping bentgrass).